A 235-amino-acid chain; its full sequence is Protein GrpE (235 aa).

Polar residues predominate over residues 1–18 (MTDGNQKPDGNSGEQVTV). Disordered stretches follow at residues 1–50 (MTDG…DAAH) and 198–235 (ESVDDGTAVADTAENDQADQGNSADTSGEQAESEPSGS). Residues 19 to 35 (TDKRRIDPETGEVRHVP) are compositionally biased toward basic and acidic residues. The span at 215–235 (ADQGNSADTSGEQAESEPSGS) shows a compositional bias: polar residues.

It belongs to the GrpE family. In terms of assembly, homodimer.

It localises to the cytoplasm. In terms of biological role, participates actively in the response to hyperosmotic and heat shock by preventing the aggregation of stress-denatured proteins, in association with DnaK and GrpE. It is the nucleotide exchange factor for DnaK and may function as a thermosensor. Unfolded proteins bind initially to DnaJ; upon interaction with the DnaJ-bound protein, DnaK hydrolyzes its bound ATP, resulting in the formation of a stable complex. GrpE releases ADP from DnaK; ATP binding to DnaK triggers the release of the substrate protein, thus completing the reaction cycle. Several rounds of ATP-dependent interactions between DnaJ, DnaK and GrpE are required for fully efficient folding. This Mycobacterium tuberculosis (strain ATCC 25177 / H37Ra) protein is Protein GrpE.